Reading from the N-terminus, the 260-residue chain is MKTSDYLKKYGIRLKKHLGQVFLSDDRIAKRIVKEADLKPDDVVVEIGAGAGTLTEELAKTGARVIAYEIDEGLAPILQERLSKYPNVELRFEDFLKARDVPEEAICVSNIPYSVTGPIMEKIIEWRFKKAIVMVQKEVGERILSKPGRKSYGYLSVVVQTFYEVRKLFDVSRSYFVPNPEVDSVVVEMKRKAVEIDFPQFKKFVSMIFSKKRKTLKNNLRPFLSVFEGVDLSRRAEQLSIEEIIELYNIWRRALECSEE.

S-adenosyl-L-methionine contacts are provided by Leu23, Gly48, Glu69, Asp94, and Asn110.

It belongs to the class I-like SAM-binding methyltransferase superfamily. rRNA adenine N(6)-methyltransferase family. RsmA subfamily.

It is found in the cytoplasm. It catalyses the reaction adenosine(1518)/adenosine(1519) in 16S rRNA + 4 S-adenosyl-L-methionine = N(6)-dimethyladenosine(1518)/N(6)-dimethyladenosine(1519) in 16S rRNA + 4 S-adenosyl-L-homocysteine + 4 H(+). Functionally, specifically dimethylates two adjacent adenosines (A1518 and A1519) in the loop of a conserved hairpin near the 3'-end of 16S rRNA in the 30S particle. May play a critical role in biogenesis of 30S subunits. In Thermotoga neapolitana (strain ATCC 49049 / DSM 4359 / NBRC 107923 / NS-E), this protein is Ribosomal RNA small subunit methyltransferase A.